The chain runs to 476 residues: Probable periplasmic serine endoprotease DegP-like (476 aa).

The first 27 residues, 1-27, serve as a signal peptide directing secretion; sequence MSIPRLKSYFTILATVLVLGQAVSAQA. Residues histidine 116, aspartate 146, and serine 219 each act as charge relay system in the active site. Substrate contacts are provided by residues 217–219 and 274–278; these read GNS and LGVVI. 2 PDZ domains span residues 263–354 and 360–465; these read LKTG…IRDG and ELTV…LRQG.

Belongs to the peptidase S1C family.

The protein resides in the periplasm. It catalyses the reaction Acts on substrates that are at least partially unfolded. The cleavage site P1 residue is normally between a pair of hydrophobic residues, such as Val-|-Val.. Its function is as follows. Might be efficient in the degradation of transiently denatured and unfolded proteins which accumulate in the periplasm following stress conditions. The polypeptide is Probable periplasmic serine endoprotease DegP-like (mucD) (Pseudomonas fluorescens (strain ATCC BAA-477 / NRRL B-23932 / Pf-5)).